We begin with the raw amino-acid sequence, 258 residues long: 2-oxo-tetronate isomerase (258 aa).

E143 functions as the Proton donor/acceptor in the catalytic mechanism. E143, D178, Q204, and E240 together coordinate Mg(2+). Residue E240 is the Proton donor/acceptor of the active site.

It belongs to the hyi family. OtnI subfamily.

It carries out the reaction 2-dehydro-L-erythronate = 3-dehydro-L-erythronate. The catalysed reaction is 2-dehydro-D-erythronate = 3-dehydro-D-erythronate. Its function is as follows. Catalyzes the isomerization of 2-oxo-tetronate to 3-oxo-tetronate. This chain is 2-oxo-tetronate isomerase, found in Haemophilus influenzae (strain ATCC 51907 / DSM 11121 / KW20 / Rd).